A 161-amino-acid polypeptide reads, in one-letter code: Allophycocyanin beta chain (161 aa).

Position 71 is an N4-methylasparagine (Asn-71). Cys-81 is a binding site for (2R,3E)-phycocyanobilin.

Belongs to the phycobiliprotein family. As to quaternary structure, heterodimer of an alpha and a beta chain. Post-translationally, contains one covalently linked phycocyanobilin chromophore.

It localises to the plastid. The protein localises to the chloroplast thylakoid membrane. In terms of biological role, light-harvesting photosynthetic bile pigment-protein from the phycobiliprotein complex. Allophycocyanin has a maximum absorption at approximately 650 nanometers. The protein is Allophycocyanin beta chain (apcB) of Aglaothamnion neglectum (Red alga).